The chain runs to 276 residues: tRNA (guanine-N(7)-)-methyltransferase (276 aa).

The interval 1–36 (MAAETRNVAGAEAPPPQKRYYRQRAHSNPMADHTLR) is disordered. Alanine 2 carries the post-translational modification N-acetylalanine. At serine 27 the chain carries Phosphoserine; by PKB/AKT1 and RPS6KA3. Positions 84, 107, 108, 109, 140, 141, and 160 each coordinate S-adenosyl-L-homocysteine. Residues glycine 84 and glutamate 107 each coordinate S-adenosyl-L-methionine. S-adenosyl-L-methionine is bound by residues arginine 109, asparagine 140, alanine 141, and leucine 160. Aspartate 163 is an active-site residue. Positions 164 to 172 (PHFKRTKHK) are alphaC helix. Residues threonine 238 and glutamate 240 each coordinate S-adenosyl-L-homocysteine. S-adenosyl-L-methionine is bound by residues threonine 238 and glutamate 240. The interval 238–246 (TEEGKKVLR) is alpha6 helix.

It belongs to the class I-like SAM-binding methyltransferase superfamily. TrmB family. As to quaternary structure, catalytic component of the METTL1-WDR4 complex, composed of METTL1 and WDR4. Phosphorylation at Ser-27 by PKB/AKT1 inactivates its methyltransferase activity via a steric interference mechanism in the active site that locally disrupts the catalytic center. Phosphorylation at Ser-27 does not affect the interaction with WDR4. Ubiquitous.

It is found in the nucleus. The enzyme catalyses guanosine(46) in tRNA + S-adenosyl-L-methionine = N(7)-methylguanosine(46) in tRNA + S-adenosyl-L-homocysteine. It catalyses the reaction a guanosine in mRNA + S-adenosyl-L-methionine = an N(7)-methylguanosine in mRNA + S-adenosyl-L-homocysteine. It carries out the reaction a guanosine in miRNA + S-adenosyl-L-methionine = an N(7)-methylguanosine in miRNA + S-adenosyl-L-homocysteine. It functions in the pathway tRNA modification; N(7)-methylguanine-tRNA biosynthesis. In terms of biological role, catalytic component of METTL1-WDR4 methyltransferase complex that mediates the formation of N(7)-methylguanine in a subset of RNA species, such as tRNAs, mRNAs and microRNAs (miRNAs). Catalyzes the formation of N(7)-methylguanine at position 46 (m7G46) in a large subset of tRNAs that contain the 5'-RAGGU-3' motif within the variable loop. M7G46 interacts with C13-G22 in the D-loop to stabilize tRNA tertiary structure and protect tRNAs from decay. Also acts as a methyltransferase for a subset of internal N(7)-methylguanine in mRNAs. Internal N(7)-methylguanine methylation of mRNAs in response to stress promotes their relocalization to stress granules, thereby suppressing their translation. Also methylates a specific subset of miRNAs, such as let-7. N(7)-methylguanine methylation of let-7 miRNA promotes let-7 miRNA processing by disrupting an inhibitory secondary structure within the primary miRNA transcript (pri-miRNA). Acts as a regulator of embryonic stem cell self-renewal and differentiation. This Homo sapiens (Human) protein is tRNA (guanine-N(7)-)-methyltransferase.